The chain runs to 601 residues: MTDRVLPEQIRNFGIIAHVDHGKSTLADRILQLTGAVSDRDMREQYLDRLYIERERGITIKSQAVTLQWDCDATQYVLNMVDTPGHVDFTYEVSRSLAACEAAVILVDATQGVEAQTLANLHLAIENNLLIIPVLSKVDLPSADVEGATLELSEVLECRVEDVMHVSGKTGYGVKELLDLIVRKAPPPKGDVTSAPRALIFDSIYDSYRGVVTYVKMCDGTIRVGDKIRMMSTGAEHTLLEVGVSNPEPQSRHSLSVGEVGYFITGVKDVRKSRVGDTITTDTHTATVPLPGYSNPKPMVFSGIYPLNGNEYSALREGLDRLKLSDASIVYTPETSAALGFGFRCGFLGLLHMEIVSERLNREFGLATISTAPSVAYEITPDGEKTLVVMNPSDFPSGKIKEIKEPTVKVSILSPKEYIGSIMELCQARRGVMQGIEYFGSVRAELIYVMPLAEIVFDFFDSLKSRTKGYASFDYNPEGSQPADLVKVDILLQGNKVDAFSAIVHSSKAYSYGSSISKRLSELIPRQQFEVPIQAAIGSRVVARETIRAVRKDVVAKCYGGDITRKRKLLERQKQGKARMKLIGRVEVPQEVFVATLSSYK.

One can recognise a tr-type G domain in the interval glutamate 8–lysine 189. Aspartate 20 to threonine 25 serves as a coordination point for GTP.

It belongs to the TRAFAC class translation factor GTPase superfamily. Classic translation factor GTPase family. LepA subfamily.

It is found in the cell membrane. The catalysed reaction is GTP + H2O = GDP + phosphate + H(+). Required for accurate and efficient protein synthesis under certain stress conditions. May act as a fidelity factor of the translation reaction, by catalyzing a one-codon backward translocation of tRNAs on improperly translocated ribosomes. Back-translocation proceeds from a post-translocation (POST) complex to a pre-translocation (PRE) complex, thus giving elongation factor G a second chance to translocate the tRNAs correctly. Binds to ribosomes in a GTP-dependent manner. This is Elongation factor 4 from Tropheryma whipplei (strain TW08/27) (Whipple's bacillus).